A 446-amino-acid chain; its full sequence is tRNA-2-methylthio-N(6)-dimethylallyladenosine synthase (446 aa).

The MTTase N-terminal domain occupies 3–124; that stretch reads KKLYIKTYGC…LPELISKVVR (122 aa). The [4Fe-4S] cluster site is built by Cys12, Cys48, Cys87, Cys162, Cys166, and Cys169. The region spanning 148 to 380 is the Radical SAM core domain; the sequence is YPQGASAFIS…QKELSSQQLA (233 aa). The TRAM domain maps to 383 to 446; that stretch reads ESCVGSTMKV…SNSLTGEIYT (64 aa).

Belongs to the methylthiotransferase family. MiaB subfamily. As to quaternary structure, monomer. [4Fe-4S] cluster serves as cofactor.

Its subcellular location is the cytoplasm. It carries out the reaction N(6)-dimethylallyladenosine(37) in tRNA + (sulfur carrier)-SH + AH2 + 2 S-adenosyl-L-methionine = 2-methylsulfanyl-N(6)-dimethylallyladenosine(37) in tRNA + (sulfur carrier)-H + 5'-deoxyadenosine + L-methionine + A + S-adenosyl-L-homocysteine + 2 H(+). Catalyzes the methylthiolation of N6-(dimethylallyl)adenosine (i(6)A), leading to the formation of 2-methylthio-N6-(dimethylallyl)adenosine (ms(2)i(6)A) at position 37 in tRNAs that read codons beginning with uridine. The protein is tRNA-2-methylthio-N(6)-dimethylallyladenosine synthase of Rickettsia canadensis (strain McKiel).